The chain runs to 455 residues: Chromosomal replication initiator protein DnaA (455 aa).

A domain I, interacts with DnaA modulators region spans residues 1–74 (MFDIEKFWQH…IQSAYGYAGI (74 aa)). Positions 74 to 117 (IEILPVFQINENNDSPERIVTPEPRYAIQLQQEKRAHKQFTKNL) are domain II. The interval 118–334 (KLNEKYTFDN…GALVKVQAYA (217 aa)) is domain III, AAA+ region. 4 residues coordinate ATP: G162, G164, K165, and T166. Positions 335–455 (TIERADINVN…VFDLKQMIEH (121 aa)) are domain IV, binds dsDNA.

The protein belongs to the DnaA family. In terms of assembly, oligomerizes as a right-handed, spiral filament on DNA at oriC.

Its subcellular location is the cytoplasm. Its function is as follows. Plays an essential role in the initiation and regulation of chromosomal replication. ATP-DnaA binds to the origin of replication (oriC) to initiate formation of the DNA replication initiation complex once per cell cycle. Binds the DnaA box (a 9 base pair repeat at the origin) and separates the double-stranded (ds)DNA. Forms a right-handed helical filament on oriC DNA; dsDNA binds to the exterior of the filament while single-stranded (ss)DNA is stabiized in the filament's interior. The ATP-DnaA-oriC complex binds and stabilizes one strand of the AT-rich DNA unwinding element (DUE), permitting loading of DNA polymerase. After initiation quickly degrades to an ADP-DnaA complex that is not apt for DNA replication. Binds acidic phospholipids. This is Chromosomal replication initiator protein DnaA from Lactobacillus helveticus (strain DPC 4571).